The chain runs to 432 residues: Probable N-acetylmuramoyl-L-alanine amidase AmiB (432 aa).

The signal sequence occupies residues 1 to 20 (MKTKILFFLFFSTFSFSIFA). The region spanning 25-244 (IAIDPGHGGK…IAYMIYEGLV (220 aa)) is the MurNAc-LAA domain. LysM domains follow at residues 292–335 (IRHI…SIKI) and 385–429 (LYHK…KIKL).

Belongs to the N-acetylmuramoyl-L-alanine amidase 3 family.

It localises to the periplasm. The catalysed reaction is Hydrolyzes the link between N-acetylmuramoyl residues and L-amino acid residues in certain cell-wall glycopeptides.. Cell-wall hydrolase involved in septum cleavage during cell division. This chain is Probable N-acetylmuramoyl-L-alanine amidase AmiB (amiB), found in Haemophilus influenzae (strain ATCC 51907 / DSM 11121 / KW20 / Rd).